The sequence spans 317 residues: Pyridoxal 5'-phosphate synthase subunit PdxS (317 aa).

A D-ribose 5-phosphate-binding site is contributed by aspartate 47. The active-site Schiff-base intermediate with D-ribose 5-phosphate is lysine 104. Glycine 176 contacts D-ribose 5-phosphate. Residue arginine 188 coordinates D-glyceraldehyde 3-phosphate. Residues glycine 237 and 258-259 contribute to the D-ribose 5-phosphate site; that span reads GS.

This sequence belongs to the PdxS/SNZ family. In the presence of PdxT, forms a dodecamer of heterodimers.

It carries out the reaction aldehydo-D-ribose 5-phosphate + D-glyceraldehyde 3-phosphate + L-glutamine = pyridoxal 5'-phosphate + L-glutamate + phosphate + 3 H2O + H(+). Its pathway is cofactor biosynthesis; pyridoxal 5'-phosphate biosynthesis. Its function is as follows. Catalyzes the formation of pyridoxal 5'-phosphate from ribose 5-phosphate (RBP), glyceraldehyde 3-phosphate (G3P) and ammonia. The ammonia is provided by the PdxT subunit. Can also use ribulose 5-phosphate and dihydroxyacetone phosphate as substrates, resulting from enzyme-catalyzed isomerization of RBP and G3P, respectively. In Corynebacterium glutamicum (strain ATCC 13032 / DSM 20300 / JCM 1318 / BCRC 11384 / CCUG 27702 / LMG 3730 / NBRC 12168 / NCIMB 10025 / NRRL B-2784 / 534), this protein is Pyridoxal 5'-phosphate synthase subunit PdxS.